The primary structure comprises 217 residues: Phosphatidylserine decarboxylase proenzyme (217 aa).

Serine 183 serves as the catalytic Schiff-base intermediate with substrate; via pyruvic acid. At serine 183 the chain carries Pyruvic acid (Ser); by autocatalysis.

The protein belongs to the phosphatidylserine decarboxylase family. PSD-A subfamily. Heterodimer of a large membrane-associated beta subunit and a small pyruvoyl-containing alpha subunit. Pyruvate serves as cofactor. In terms of processing, is synthesized initially as an inactive proenzyme. Formation of the active enzyme involves a self-maturation process in which the active site pyruvoyl group is generated from an internal serine residue via an autocatalytic post-translational modification. Two non-identical subunits are generated from the proenzyme in this reaction, and the pyruvate is formed at the N-terminus of the alpha chain, which is derived from the carboxyl end of the proenzyme. The post-translation cleavage follows an unusual pathway, termed non-hydrolytic serinolysis, in which the side chain hydroxyl group of the serine supplies its oxygen atom to form the C-terminus of the beta chain, while the remainder of the serine residue undergoes an oxidative deamination to produce ammonia and the pyruvoyl prosthetic group on the alpha chain.

It is found in the cell membrane. The catalysed reaction is a 1,2-diacyl-sn-glycero-3-phospho-L-serine + H(+) = a 1,2-diacyl-sn-glycero-3-phosphoethanolamine + CO2. It functions in the pathway phospholipid metabolism; phosphatidylethanolamine biosynthesis; phosphatidylethanolamine from CDP-diacylglycerol: step 2/2. Catalyzes the formation of phosphatidylethanolamine (PtdEtn) from phosphatidylserine (PtdSer). In Cupriavidus pinatubonensis (strain JMP 134 / LMG 1197) (Cupriavidus necator (strain JMP 134)), this protein is Phosphatidylserine decarboxylase proenzyme.